Reading from the N-terminus, the 23-residue chain is MSILPLVHAMANVRGDIEYLTEA.

It belongs to the LDH/MDH superfamily. MDH type 2 family.

It carries out the reaction (S)-malate + NAD(+) = oxaloacetate + NADH + H(+). Catalyzes the reversible oxidation of malate to oxaloacetate. The sequence is that of Malate dehydrogenase (mdh) from Thermoleophilum album.